Here is a 3587-residue protein sequence, read N- to C-terminus: Surfactin synthase subunit 1 (3587 aa).

Carrier domains lie at 971 to 1046 (APRN…DHRE), 2010 to 2085 (APRN…ASAE), and 3038 to 3112 (APTT…ERAE). O-(pantetheine 4'-phosphoryl)serine occurs at positions 1006, 2045, and 3073.

It belongs to the ATP-dependent AMP-binding enzyme family. It depends on pantetheine 4'-phosphate as a cofactor.

Its pathway is antibiotic biosynthesis; surfactin biosynthesis. This protein is a multifunctional enzyme able to activate and polymerize the amino acids Leu, Glu, Asp and Val. Activation sites for these AA consist of individual domains. This is Surfactin synthase subunit 1 (srfAA) from Bacillus subtilis (strain 168).